An 84-amino-acid chain; its full sequence is MPRPAYRSRSVRRIKVKTPGGRTVIHYEKRAKGVPKCPITGLPIGGMNKKVYRFGIKIRAPSRPYGGVYSHKVLARALRLAVRK.

The protein belongs to the eukaryotic ribosomal protein eL34 family.

This is Large ribosomal subunit protein eL34 (ribL34e) from Pyrobaculum aerophilum (strain ATCC 51768 / DSM 7523 / JCM 9630 / CIP 104966 / NBRC 100827 / IM2).